Reading from the N-terminus, the 309-residue chain is Protein US16 (309 aa).

7 helical membrane-spanning segments follow: residues 50 to 70, 85 to 105, 128 to 148, 154 to 174, 185 to 205, 210 to 230, and 245 to 265; these read GLLL…SLVF, VVWA…FVYF, LVLL…TCAC, VLTS…VVFI, FALI…IVFT, WPLR…AGHF, and DVAH…FLIL.

The protein belongs to the cytomegalovirus US12 family.

It localises to the host membrane. It is found in the host cytoplasm. The sequence is that of Protein US16 (US16) from Human cytomegalovirus (strain Merlin) (HHV-5).